The sequence spans 332 residues: Phosphate acyltransferase (332 aa).

Belongs to the PlsX family. Homodimer. Probably interacts with PlsY.

The protein localises to the cytoplasm. The catalysed reaction is a fatty acyl-[ACP] + phosphate = an acyl phosphate + holo-[ACP]. It participates in lipid metabolism; phospholipid metabolism. Catalyzes the reversible formation of acyl-phosphate (acyl-PO(4)) from acyl-[acyl-carrier-protein] (acyl-ACP). This enzyme utilizes acyl-ACP as fatty acyl donor, but not acyl-CoA. In Thermoanaerobacter pseudethanolicus (strain ATCC 33223 / 39E) (Clostridium thermohydrosulfuricum), this protein is Phosphate acyltransferase.